A 175-amino-acid chain; its full sequence is Endoribonuclease YbeY (175 aa).

Zn(2+)-binding residues include His129, His133, and His139.

It belongs to the endoribonuclease YbeY family. It depends on Zn(2+) as a cofactor.

Its subcellular location is the cytoplasm. Single strand-specific metallo-endoribonuclease involved in late-stage 70S ribosome quality control and in maturation of the 3' terminus of the 16S rRNA. The protein is Endoribonuclease YbeY of Lactobacillus johnsonii (strain CNCM I-12250 / La1 / NCC 533).